Here is a 309-residue protein sequence, read N- to C-terminus: Taste receptor type 2 member 8 (309 aa).

Over Met1–Asn7 the chain is Extracellular. Residues Ile8–Gly28 traverse the membrane as a helical segment. At Leu29–Asn50 the chain is on the cytoplasmic side. A helical membrane pass occupies residues Leu51 to Leu71. Topologically, residues Tyr72–Gln82 are extracellular. The chain crosses the membrane as a helical span at residues Ile83–Leu103. The Cytoplasmic portion of the chain corresponds to Asn104 to Arg131. Residues Trp132–Leu152 form a helical membrane-spanning segment. Over Ser153–Thr184 the chain is Extracellular. The N-linked (GlcNAc...) asparagine glycan is linked to Asn167. A helical transmembrane segment spans residues Leu185–Val205. The Cytoplasmic segment spans residues Arg206–Leu239. A helical transmembrane segment spans residues Leu240–Ile260. Over Thr261–Ala266 the chain is Extracellular. A helical transmembrane segment spans residues Met267–Ile287. At Leu288–Thr309 the chain is on the cytoplasmic side.

This sequence belongs to the G-protein coupled receptor T2R family.

Its subcellular location is the membrane. Functionally, receptor that may play a role in the perception of bitterness and is gustducin-linked. May play a role in sensing the chemical composition of the gastrointestinal content. The activity of this receptor may stimulate alpha gustducin, mediate PLC-beta-2 activation and lead to the gating of TRPM5. The polypeptide is Taste receptor type 2 member 8 (TAS2R8) (Papio hamadryas (Hamadryas baboon)).